A 495-amino-acid polypeptide reads, in one-letter code: Glutelin type-B 2 (495 aa).

The signal sequence occupies residues 1 to 24; it reads MATTIFSRFSIYFCAMLLCQGSMA. Cystine bridges form between cysteine 45–cysteine 78 and cysteine 121–cysteine 305. 2 consecutive Cupin type-1 domains span residues 50-245 and 311-460; these read LQAF…VAAK and VNIE…EQAR. Residues 464-495 are disordered; that stretch reads NNRGEEHGAFTPRFQQQYYPGFSNESESETSE.

Belongs to the 11S seed storage protein (globulins) family. In terms of assembly, hexamer; each subunit is composed of an acidic and a basic chain derived from a single precursor and linked by a disulfide bond.

In terms of biological role, seed storage protein. In Oryza sativa subsp. japonica (Rice), this protein is Glutelin type-B 2 (GLUB2).